Consider the following 508-residue polypeptide: Serine/threonine-protein kinase VRK2 (508 aa).

Positions 29-319 (WVLGKKIGSG…KKILNPHGIP (291 aa)) constitute a Protein kinase domain. Residues 35–43 (IGSGGFGLI) and Lys-61 contribute to the ATP site. Asp-166 functions as the Proton acceptor in the catalytic mechanism. Thr-336 is subject to Phosphothreonine. The tract at residues 397 to 508 (TRRRQKYQES…MLVFLALFFL (112 aa)) is interaction with MAP3K7. Ser-406 bears the Phosphoserine mark. A helical; Anchor for type IV membrane protein transmembrane segment spans residues 487-507 (VYYYRIIIPVLLMLVFLALFF).

Belongs to the protein kinase superfamily. CK1 Ser/Thr protein kinase family. VRK subfamily. As to quaternary structure, isoform 1 interacts with MAP3K7, MAP2K7, MAP2K1 and KSR1. Isoform 1 and isoform 2 interact with RAN and MAPK8IP1. In terms of assembly, (Microbial infection) Isoform 1 interacts with Epstein-Barr virus BHRF1; this interaction is involved in protecting cells from apoptosis. (Microbial infection) Isoform 1 interacts with vaccinia protein B12. In terms of processing, autophosphorylated. Isoform 1 and isoform 2 are expressed in various tumor cell lines. Expression of isoform 1 inversely correlates with ERBB2 in breast carcinomas (at protein level). Widely expressed. Highly expressed in fetal liver, skeletal muscle, pancreas, heart, peripheral blood leukocytes and testis.

It localises to the cytoplasm. The protein resides in the endoplasmic reticulum membrane. Its subcellular location is the mitochondrion membrane. The protein localises to the nucleus envelope. It is found in the nucleus. It catalyses the reaction L-seryl-[protein] + ATP = O-phospho-L-seryl-[protein] + ADP + H(+). It carries out the reaction L-threonyl-[protein] + ATP = O-phospho-L-threonyl-[protein] + ADP + H(+). Its activity is regulated as follows. RAN inhibits its autophosphorylation and its ability to phosphorylate histone H3. In terms of biological role, serine/threonine kinase that regulates several signal transduction pathways. Isoform 1 modulates the stress response to hypoxia and cytokines, such as interleukin-1 beta (IL1B) and this is dependent on its interaction with MAPK8IP1, which assembles mitogen-activated protein kinase (MAPK) complexes. Inhibition of signal transmission mediated by the assembly of MAPK8IP1-MAPK complexes reduces JNK phosphorylation and JUN-dependent transcription. Phosphorylates 'Thr-18' of p53/TP53, histone H3, and may also phosphorylate MAPK8IP1. Phosphorylates BANF1 and disrupts its ability to bind DNA and reduces its binding to LEM domain-containing proteins. Down-regulates the transactivation of transcription induced by ERBB2, HRAS, BRAF, and MEK1. Blocks the phosphorylation of ERK in response to ERBB2 and HRAS. Can also phosphorylate the following substrates that are commonly used to establish in vitro kinase activity: casein, MBP and histone H2B, but it is not sure that this is physiologically relevant. Phosphorylates 'Thr-18' of p53/TP53, as well as histone H3. Reduces p53/TP53 ubiquitination by MDM2, promotes p53/TP53 acetylation by EP300 and thereby increases p53/TP53 stability and activity. The polypeptide is Serine/threonine-protein kinase VRK2 (VRK2) (Homo sapiens (Human)).